The sequence spans 237 residues: Urease accessory protein UreF (237 aa).

Belongs to the UreF family. In terms of assembly, ureD, UreF and UreG form a complex that acts as a GTP-hydrolysis-dependent molecular chaperone, activating the urease apoprotein by helping to assemble the nickel containing metallocenter of UreC. The UreE protein probably delivers the nickel.

It is found in the cytoplasm. Functionally, required for maturation of urease via the functional incorporation of the urease nickel metallocenter. The polypeptide is Urease accessory protein UreF (Rhodopseudomonas palustris (strain HaA2)).